We begin with the raw amino-acid sequence, 387 residues long: Acyl-[acyl-carrier-protein] 6-desaturase (387 aa).

The N-terminal 29 residues, 1–29 (MALVFKSIGAHKTPPCTLNLASPALYHTR), are a transit peptide targeting the chloroplast. Residues Glu131, Glu169, His172, Glu222, Glu255, and His258 each coordinate Fe cation.

This sequence belongs to the fatty acid desaturase type 2 family. Fe(2+) serves as cofactor.

The protein resides in the plastid. It is found in the chloroplast. The catalysed reaction is hexadecanoyl-[ACP] + 2 reduced [2Fe-2S]-[ferredoxin] + O2 + 2 H(+) = (6Z)-hexadecenoyl-[ACP] + 2 oxidized [2Fe-2S]-[ferredoxin] + 2 H2O. It participates in lipid metabolism; fatty acid metabolism. With respect to regulation, inhibited by KCN or H(2)O(2). Functionally, delta(6) fatty acid desaturase introducing a cis double bond at carbon 6 of palmitoyl-[acyl-carrier protein](16:0-ACP), producing 16:1(6Z)-ACP. No activity with the coenzyme A ester of the fatty acid. The position of the double bond is determined by its distance from the carboxyl end of the fatty acid. Low activity with several saturated acyl-[acyl-carrier protein]s, including 14:0-ACP and 18:0-ACP. Requires reduced ferredoxin for detectable in vitro activity. The chain is Acyl-[acyl-carrier-protein] 6-desaturase from Thunbergia alata (Black-eyed Susan vine).